The following is a 592-amino-acid chain: Salivary peroxidase/catechol oxidase (592 aa).

A signal peptide spans 1–21 (MWMFLKLLLFVCSSWWSCAQA). Cys24 and Cys37 are joined by a disulfide. Asn25 carries N-linked (GlcNAc...) asparagine glycosylation. Catalysis depends on His110, which acts as the Proton acceptor. Ca(2+)-binding residues include Asp111, Thr187, Phe189, Asp191, and Ser193. Asn230 is a glycosylation site (N-linked (GlcNAc...) asparagine). Cys235 and Cys244 form a disulfide bridge. His353 provides a ligand contact to heme b. Asn366 carries N-linked (GlcNAc...) asparagine glycosylation. Disulfide bonds link Cys452-Cys509 and Cys553-Cys580.

It belongs to the peroxidase family. XPO subfamily. In terms of tissue distribution, female salivary gland.

It localises to the secreted. It catalyses the reaction 2 catechol + O2 = 2 1,2-benzoquinone + 2 H2O. Its function is as follows. Inhibits noradrenaline-induced smooth muscle contraction in the host, probably due to the oxidation of noradrenaline, resulting in vasodilation. Exhibits peroxidase activity. In Anopheles albimanus (New world malaria mosquito), this protein is Salivary peroxidase/catechol oxidase.